A 483-amino-acid chain; its full sequence is Cysteine--tRNA ligase (483 aa).

Cys28 is a binding site for Zn(2+). Positions 30-40 match the 'HIGH' region motif; the sequence is MTVYDYCHLGH. The Zn(2+) site is built by Cys212, His237, and Glu241. A 'KMSKS' region motif is present at residues 269–273; that stretch reads KMSKS. Residue Lys272 participates in ATP binding.

It belongs to the class-I aminoacyl-tRNA synthetase family. As to quaternary structure, monomer. It depends on Zn(2+) as a cofactor.

The protein localises to the cytoplasm. The catalysed reaction is tRNA(Cys) + L-cysteine + ATP = L-cysteinyl-tRNA(Cys) + AMP + diphosphate. This chain is Cysteine--tRNA ligase, found in Bordetella avium (strain 197N).